The sequence spans 204 residues: MPINTFCKISLFICALFCSTVTLANPNVYVEGPSIENVMRASSYVSYTYRTEAKRHQWVGNDDLFFIRLSSIDTFGDQRSALIASLSPHSYSIERVSTNCKTKDTIINTRTRYDVNGKVLESNKEEEKIGRPIPDSYLAEAVIVMCDALAIIPANPNVDGEKITASAPFMNVINEHVRAKGVTRRAITVEQIEAHFKTTLNQRK.

The first 24 residues, methionine 1–alanine 24, serve as a signal peptide directing secretion.

This is an uncharacterized protein from Pasteurella multocida (strain Pm70).